The chain runs to 496 residues: Angiopoietin-2 (496 aa).

A signal peptide spans 1–18; it reads MWQLVFLTLSCDLAVATA. N-linked (GlcNAc...) asparagine glycosylation is found at Asn-90, Asn-120, Asn-134, Asn-152, Asn-241, and Asn-304. The stretch at 167–249 forms a coiled coil; it reads STNKLEKQIL…VNNSVLQKQQ (83 aa). In terms of domain architecture, Fibrinogen C-terminal spans 275 to 495; that stretch reads KDEQIIFRDC…ATTMMIRPAD (221 aa). A disulfide bridge connects residues Cys-284 and Cys-313. Positions 429, 431, 433, and 435 each coordinate Ca(2+). Disulfide bonds link Cys-433/Cys-435 and Cys-437/Cys-450.

In terms of assembly, interacts with TEK/TIE2, competing for the same binding site as ANGPT1. Interacts with ITGA5. Interacts with SVEP1/polydom. Interacts with THBD; this interaction significantly inhibits the generation of activated PC and TAFIa/CPB2 by the thrombin/thrombomodulin complex.

Its subcellular location is the secreted. In terms of biological role, binds to TEK/TIE2, competing for the ANGPT1 binding site, and modulating ANGPT1 signaling. Can induce tyrosine phosphorylation of TEK/TIE2 in the absence of ANGPT1. In the absence of angiogenic inducers, such as VEGF, ANGPT2-mediated loosening of cell-matrix contacts may induce endothelial cell apoptosis with consequent vascular regression. In concert with VEGF, it may facilitate endothelial cell migration and proliferation, thus serving as a permissive angiogenic signal. Involved in the regulation of lymphangiogenesis. This chain is Angiopoietin-2 (ANGPT2), found in Bos taurus (Bovine).